We begin with the raw amino-acid sequence, 619 residues long: DNA mismatch repair protein MutL (619 aa).

The tract at residues 339 to 400 is disordered; sequence AEKDDPPAPR…GGASWPHAQP (62 aa).

The protein belongs to the DNA mismatch repair MutL/HexB family.

Functionally, this protein is involved in the repair of mismatches in DNA. It is required for dam-dependent methyl-directed DNA mismatch repair. May act as a 'molecular matchmaker', a protein that promotes the formation of a stable complex between two or more DNA-binding proteins in an ATP-dependent manner without itself being part of a final effector complex. This Klebsiella pneumoniae subsp. pneumoniae (strain ATCC 700721 / MGH 78578) protein is DNA mismatch repair protein MutL.